Consider the following 271-residue polypeptide: Short chain dehydrogenase asqE (271 aa).

NADP(+)-binding residues include I22, D70, and N99. Catalysis depends on proton donor residues S152 and S153. NADP(+) contacts are provided by Y167, K171, and T203. Y167 (proton acceptor) is an active-site residue. The active-site Lowers pKa of active site Tyr is K171.

It belongs to the short-chain dehydrogenases/reductases (SDR) family.

The enzyme catalyses a primary alcohol + NAD(+) = an aldehyde + NADH + H(+). The catalysed reaction is a secondary alcohol + NAD(+) = a ketone + NADH + H(+). The protein operates within secondary metabolite biosynthesis. It functions in the pathway alkaloid biosynthesis. Its pathway is mycotoxin biosynthesis. Functionally, short chain dehydrogenase; part of the gene cluster that mediates the biosynthesis of the aspoquinolone mycotoxins. The role of asqE within the aspoquinolone pathway has still to be determined. The first step of the pathway is catalyzed by the nonribosomal peptide synthetase asqK that condenses anthranilic acid and O-methyl-L-tyrosine to produce 4'-methoxycyclopeptin. 4'-methoxycyclopeptin is then converted to 4'-methoxydehydrocyclopeptin by the ketoglutarate-dependent dioxygenase asqJ. AsqJ also converts its first product 4'-methoxydehydrocyclopeptin to 4'-methoxycyclopenin. The following conversion of 4'-methoxycyclopenin into 4'-methoxyviridicatin is catalyzed by the cyclopenase asqI. 4'-methoxyviridicatin is the precursor of quinolone natural products, and is further converted to quinolinone B. The prenyltransferase asqH1 then catalyzes the canonical Friedel-Crafts alkylation of quinolinone B with dimethylallyl cation to yield dimethylallyl quinolone, which is subjected to FAD-dependent dehydrogenation by the FAD-linked oxidoreductase asqF to yield conjugated aryl diene. The delta(3') double bond then serves as the site of the second alkylation with DMAPP catalyzed by the prenyltransferase asqH2 to yield a carbenium ion intermediate, which can be attacked by H(2)O to yield a styrenyl quinolone containing a C3'-hydroxyprenyl chain. The FAD-dependent monooxygenase asqG performs epoxidation of the terminal C7'-C8' olefin. Finally, after dehydratation of the epoxide at C3 by asqC, the quinolone epoxide rearrangement protein asqO catalyzes an enzymatic 3-exo-tet cyclization to yield the cyclopropyl-THF ring system in aspoquinolone. The chain is Short chain dehydrogenase asqE from Emericella nidulans (strain FGSC A4 / ATCC 38163 / CBS 112.46 / NRRL 194 / M139) (Aspergillus nidulans).